We begin with the raw amino-acid sequence, 117 residues long: LYR motif-containing protein 1 (117 aa).

This sequence belongs to the complex I LYR family.

This Dictyostelium discoideum (Social amoeba) protein is LYR motif-containing protein 1 (lyrm1).